A 190-amino-acid chain; its full sequence is NADH-quinone oxidoreductase subunit B (190 aa).

[4Fe-4S] cluster is bound by residues Cys69, Cys70, Cys134, and Cys164.

It belongs to the complex I 20 kDa subunit family. In terms of assembly, NDH-1 is composed of 14 different subunits. Subunits NuoB, C, D, E, F, and G constitute the peripheral sector of the complex. Requires [4Fe-4S] cluster as cofactor.

It is found in the cell inner membrane. It carries out the reaction a quinone + NADH + 5 H(+)(in) = a quinol + NAD(+) + 4 H(+)(out). NDH-1 shuttles electrons from NADH, via FMN and iron-sulfur (Fe-S) centers, to quinones in the respiratory chain. Couples the redox reaction to proton translocation (for every two electrons transferred, four hydrogen ions are translocated across the cytoplasmic membrane), and thus conserves the redox energy in a proton gradient. In Hyphomonas neptunium (strain ATCC 15444), this protein is NADH-quinone oxidoreductase subunit B.